The primary structure comprises 191 residues: NAD(P)H dehydrogenase (quinone) (191 aa).

The Flavodoxin-like domain occupies 4–184 (ILVIFHSITG…VAKMLGKRVA (181 aa)). FMN-binding positions include 10–15 (SITGNT), 83–85 (TRF), and 118–124 (SNEMPHG).

Belongs to the WrbA family. In terms of assembly, homodimer and homotetramer; in equilibrium. FMN serves as cofactor.

It catalyses the reaction a quinone + NADH + H(+) = a quinol + NAD(+). It carries out the reaction a quinone + NADPH + H(+) = a quinol + NADP(+). It seems to function in response to environmental stress when various electron transfer chains are affected or when the environment is highly oxidizing. It reduces quinones to the hydroquinone state to prevent interaction of the semiquinone with O2 and production of superoxide. It prefers NADH over NADPH. The chain is NAD(P)H dehydrogenase (quinone) from Archaeoglobus fulgidus (strain ATCC 49558 / DSM 4304 / JCM 9628 / NBRC 100126 / VC-16).